We begin with the raw amino-acid sequence, 463 residues long: O-acetyltransferase SAT5 (463 aa).

It belongs to the trichothecene 3-O-acetyltransferase family.

It functions in the pathway mycotoxin biosynthesis. In terms of biological role, O-acetyltransferase; part of the satratoxin SC1 cluster involved in the biosynthesis of satratoxins, trichothecene mycotoxins that are associated with human food poisonings. Satratoxins are suggested to be made by products of multiple gene clusters (SC1, SC2 and SC3) that encode 21 proteins in all, including polyketide synthases, acetyltransferases, and other enzymes expected to modify the trichothecene skeleton. SC1 encodes 10 proteins, SAT1 to SAT10. The largest are SAT8, which encodes a putative polyketide synthase (PKS) with a conventional non-reducing architecture, and SAT10, a putative protein containing four ankyrin repeats and thus may be involved in protein scaffolding. The putative short-chain reductase SAT3 may assist the PKS in some capacity. SAT6 contains a secretory lipase domain and acts probably as a trichothecene esterase. SAT5 encodes a putative acetyltransferase, and so, with SAT6, may affect endogenous protection from toxicity. The probable transcription factor SAT9 may regulate the expression of the SC1 cluster. SC2 encodes proteins SAT11 to SAT16, the largest of which encodes the putative reducing PKS SAT13. SAT11 is a cytochrome P450 monooxygenase, while SAT14 and SAT16 are probable acetyltransferases. The SC2 cluster may be regulated by the transcription factor SAT15. SC3 is a small cluster that encodes 5 proteins, SAT17 to SAT21. SAT21 is a putative MFS-type transporter which may have a role in exporting secondary metabolites. The four other proteins putatively encoded in SC3 include the taurine hydroxylase-like protein SAT17, the O-methyltransferase SAT18, the acetyltransferase SAT19, and the Cys6-type zinc finger SAT20, the latter being probably involved in regulation of SC3 expression. The protein is O-acetyltransferase SAT5 of Stachybotrys chartarum (strain CBS 109288 / IBT 7711) (Toxic black mold).